The following is a 471-amino-acid chain: Glutamate--tRNA ligase (471 aa).

Residues 9 to 19 carry the 'HIGH' region motif; the sequence is PSPTGYLHVGG. Zn(2+) contacts are provided by Cys-98, Cys-100, Cys-125, and His-127. The short motif at 237–241 is the 'KMSKS' region element; sequence KLSKR. Lys-240 is an ATP binding site.

The protein belongs to the class-I aminoacyl-tRNA synthetase family. Glutamate--tRNA ligase type 1 subfamily. In terms of assembly, monomer. Zn(2+) serves as cofactor.

It localises to the cytoplasm. It catalyses the reaction tRNA(Glu) + L-glutamate + ATP = L-glutamyl-tRNA(Glu) + AMP + diphosphate. Its function is as follows. Catalyzes the attachment of glutamate to tRNA(Glu) in a two-step reaction: glutamate is first activated by ATP to form Glu-AMP and then transferred to the acceptor end of tRNA(Glu). The sequence is that of Glutamate--tRNA ligase from Salmonella dublin (strain CT_02021853).